The following is a 114-amino-acid chain: Amphinase-2 (114 aa).

H15 functions as the Proton acceptor in the catalytic mechanism. 4 cysteine pairs are disulfide-bonded: C26/C79, C41/C85, C59/C100, and C97/C114. N-linked (GlcNAc...) asparagine glycosylation is present at N27. 42–46 lines the substrate pocket; that stretch reads KPINT. N-linked (GlcNAc...) asparagine glycans are attached at residues N67 and N91. Catalysis depends on H107, which acts as the Proton donor.

It belongs to the pancreatic ribonuclease family. Monomer. There are at least four different forms arising from glycan heterogeneity.

It is found in the secreted. Its function is as follows. Endonuclease, hydrolyzes highly polymerized RNA, poly(U) and poly(C), and the dinucleotides CpA and UpA. Hydrolyzes 18S and 28S ribosomal RNA. More active towards rCA than rUA or rUG. Has cytotoxic activity against cultured human submaxillary gland carcinoma cells. The chain is Amphinase-2 from Lithobates pipiens (Northern leopard frog).